A 318-amino-acid chain; its full sequence is MFMINLFLLIIPILLAMAFLTLAERKILGYMQLRKGPNVVGPHGMIQPFADAMKLFIKEPLRPLTSSSSLYTIAPTLALTIALVTWIPLPLPYPLINMNMGLLFILATSSLAVYSILWSGWASNSKYALIGALRAVAQTISYEFTLAIILLSLLLMNGSFTLSTLITTQEYLWLIIPSWPLAMMWFISTLAETNRAPFDLTEGESELVSGFNVEYAAGPFALFFMAEYTNIIMMNALTTTLFLGALYNLHMPETYTTSFAIKTLLLTILFLWVRASYPRFRYDQLMHLLWKNFLPLTLALCMWYVSLPVLASCIPPQA.

The next 8 helical transmembrane spans lie at 2-22 (FMIN…FLTL), 76-96 (TLAL…YPLI), 102-122 (LLFI…SGWA), 146-166 (LAII…STLI), 171-191 (YLWL…STLA), 217-237 (AGPF…MNAL), 253-273 (ETYT…FLWV), and 294-314 (LPLT…ASCI).

This sequence belongs to the complex I subunit 1 family. As to quaternary structure, core subunit of respiratory chain NADH dehydrogenase (Complex I) which is composed of 45 different subunits.

It is found in the mitochondrion inner membrane. The catalysed reaction is a ubiquinone + NADH + 5 H(+)(in) = a ubiquinol + NAD(+) + 4 H(+)(out). Functionally, core subunit of the mitochondrial membrane respiratory chain NADH dehydrogenase (Complex I) which catalyzes electron transfer from NADH through the respiratory chain, using ubiquinone as an electron acceptor. Essential for the catalytic activity and assembly of complex I. The sequence is that of NADH-ubiquinone oxidoreductase chain 1 (MT-ND1) from Lemur catta (Ring-tailed lemur).